Reading from the N-terminus, the 269-residue chain is MPELPEVETSRRGIEPHLVGATILHAHIRNGRLRWPVSDEIYRLSDTPVLSVQRRAKYLLLELPDGWIIIHLGMSGSLRILPEALPAEKHDHVDLVMSNGKILRYTDPRRFGAWLWTKELEGHNVLAHLGPEPLSGEFNGEYLQQKCAKKKTAIKPWLMDNKLVVGVGNIYASESLFAAGIHPDRLASSLSTEECDLLARVIKAVLLRSIEQGGTTLKDFLQSDGKPGYFAQELQVYGRKGEPCRVCGTPIVATKHAQRATFYCRHCQK.

Residue Pro2 is the Schiff-base intermediate with DNA of the active site. The active-site Proton donor is Glu3. The Proton donor; for beta-elimination activity role is filled by Lys57. Residues His90, Arg109, and Lys150 each contribute to the DNA site. An FPG-type zinc finger spans residues 235–269 (QVYGRKGEPCRVCGTPIVATKHAQRATFYCRHCQK). The Proton donor; for delta-elimination activity role is filled by Arg259.

This sequence belongs to the FPG family. Monomer. It depends on Zn(2+) as a cofactor.

It catalyses the reaction Hydrolysis of DNA containing ring-opened 7-methylguanine residues, releasing 2,6-diamino-4-hydroxy-5-(N-methyl)formamidopyrimidine.. It carries out the reaction 2'-deoxyribonucleotide-(2'-deoxyribose 5'-phosphate)-2'-deoxyribonucleotide-DNA = a 3'-end 2'-deoxyribonucleotide-(2,3-dehydro-2,3-deoxyribose 5'-phosphate)-DNA + a 5'-end 5'-phospho-2'-deoxyribonucleoside-DNA + H(+). Its function is as follows. Involved in base excision repair of DNA damaged by oxidation or by mutagenic agents. Acts as a DNA glycosylase that recognizes and removes damaged bases. Has a preference for oxidized purines, such as 7,8-dihydro-8-oxoguanine (8-oxoG). Has AP (apurinic/apyrimidinic) lyase activity and introduces nicks in the DNA strand. Cleaves the DNA backbone by beta-delta elimination to generate a single-strand break at the site of the removed base with both 3'- and 5'-phosphates. The chain is Formamidopyrimidine-DNA glycosylase from Salmonella choleraesuis (strain SC-B67).